Here is a 295-residue protein sequence, read N- to C-terminus: Protease HtpX (295 aa).

Transmembrane regions (helical) follow at residues 4 to 24 and 41 to 61; these read ILLFVATNLAVVLVASITLSL and SSLLVFCAVFGFAGSLVSLFI. Position 147 (histidine 147) interacts with Zn(2+). The active site involves glutamate 148. Histidine 151 lines the Zn(2+) pocket. 2 helical membrane-spanning segments follow: residues 158-178 and 199-219; these read VTLALVQGVVNTFVMFFARII and VATIVAELILGILASMIVMWF. Glutamate 224 contributes to the Zn(2+) binding site.

It belongs to the peptidase M48B family. Zn(2+) is required as a cofactor.

Its subcellular location is the cell inner membrane. The polypeptide is Protease HtpX (Pseudomonas putida (strain GB-1)).